A 228-amino-acid chain; its full sequence is Claudin-10 (228 aa).

Residues 1–21 (MASTASEIIAFMVSISGWVLV) traverse the membrane as a helical segment. At 22 to 80 (SSTLPTDYWKVSTIDGTVITTATYWANLWKACVTDSTGVSNCKDFPSMLALDGYIQACR) the chain is on the extracellular side. Residues 81–101 (GLMIAAVSLGFFGSIFALFGM) form a helical membrane-spanning segment. The Cytoplasmic segment spans residues 102-115 (KCTKVGGSDKAKAK). A helical membrane pass occupies residues 116 to 136 (IACLAGIVFILSGLCSMTGCS). The Extracellular segment spans residues 137-160 (LYANKITTEFFDPLFVEQKYELGA). The helical transmembrane segment at 161-181 (ALFIGWAGASLCIIGGVIFCF) threads the bilayer. Residues 182-228 (SISDNNKTPRYAYNGATSVMSSRTKYHGGEDFKTTNPSKQFDKNAYV) are Cytoplasmic-facing.

Belongs to the claudin family. Can form homodimers both in trans (interaction between CLDN10 molecules in opposing membranes) and in cis (interaction between CLDN10 molecules within one membrane). Interacts with CLDN19.

The protein localises to the cell junction. Its subcellular location is the tight junction. It is found in the cell membrane. The enzyme catalyses Na(+)(in) = Na(+)(out). It catalyses the reaction Li(+)(in) = Li(+)(out). The catalysed reaction is K(+)(in) = K(+)(out). It carries out the reaction Rb(+)(in) = Rb(+)(out). The enzyme catalyses Cs(+)(in) = Cs(+)(out). It catalyses the reaction NH4(+)(in) = NH4(+)(out). The catalysed reaction is methylamine(out) = methylamine(in). It carries out the reaction Mg(2+)(in) = Mg(2+)(out). The enzyme catalyses Ca(2+)(in) = Ca(2+)(out). It catalyses the reaction Sr(2+)(in) = Sr(2+)(out). The catalysed reaction is chloride(in) = chloride(out). It carries out the reaction nitrate(in) = nitrate(out). Its function is as follows. Forms paracellular channels: polymerizes in tight junction strands with cation- and anion-selective channels through the strands, conveying epithelial permeability in a process known as paracellular tight junction permeability. In sweat glands and in the thick ascending limb (TAL) of Henle's loop in kidney, it controls paracellular sodium permeability which is essential for proper sweat production and renal function. In renal proximal tubules, it conveys selective chloride over hydrogencarbonate anion permeability which is required for renal chloride reabsorption and salt homeostasis. This is Claudin-10 (CLDN10) from Pongo abelii (Sumatran orangutan).